A 474-amino-acid chain; its full sequence is uncharacterized protein (474 aa).

Acidic residues predominate over residues 1-11; it reads MGGSDFEDDEL. The disordered stretch occupies residues 1 to 163; the sequence is MGGSDFEDDE…ETSPFNREDG (163 aa). Residues 12-25 show a composition bias toward basic and acidic residues; it reads FKDLYGEENEKKVE. Residues 27 to 39 are compositionally biased toward polar residues; sequence ASGNQETSNVTPT. The span at 40-76 shows a compositional bias: basic and acidic residues; the sequence is KENEGYEELEKSGEAGAERTKENPFREEPGADFDRSG. Residues 129–140 show a composition bias toward polar residues; sequence NDNYNENQSALT. RRM domains are found at residues 163-245 and 247-324; these read GKMF…EQEK and AKMF…RATP. Residues 412–474 form a disordered region; the sequence is DPSKMNQGTG…GGHSFHPYRR (63 aa). Positions 425–434 are enriched in low complexity; the sequence is PFSPSMPSGS. Over residues 435–444 the composition is skewed to gly residues; it reads SRGGYHGRNP.

Its subcellular location is the nucleus. This is an uncharacterized protein from Schizosaccharomyces pombe (strain 972 / ATCC 24843) (Fission yeast).